Here is a 477-residue protein sequence, read N- to C-terminus: MVRVRLAPSPTGTLHIGTARTAVFNWLYAKHEQGAFVLRIEDTDKERSKPEYTQNILEGLQWLGINWDEEPVIQSERVAQHREAIQTLLDRGLAYRCYASETELTAMRDAQKAANQAPRYDNRHRTLTPEQEQAFQTEGREAVIRFRIDDAAEIRWNDLVRGAMSWRGSDLGGDMVIARRAPADQIGDPLYNLVVVVDDASMEITHVIRGEDHIANTAKQLLLYEALGLPLPTFAHAPLILNAEGRKLSKRDGVTSINDFRAMGYTPDAIANYMTLLGWSVPEGMEEQFSLCEAAAVFGFDRVNKAGARFDWDKLNWLNAQVLHGWTADHLLEELTPLWAERGWTPPSEKSWCLDLCALLGPSLTLLKDGVDQAEPFFDRPDLQEDALKQLGIEGAKAAMADLLQRLENNPWDGSDVDQAKAWLGDAAKAADVKKGVVMKSLRAALLGRLQGPDLITTWSLLARIGEDLPRLRRCLG.

Residues 8–18 carry the 'HIGH' region motif; that stretch reads PSPTGTLHIGT. A 'KMSKS' region motif is present at residues 247–251; that stretch reads KLSKR. Residue Lys-250 participates in ATP binding.

Belongs to the class-I aminoacyl-tRNA synthetase family. Glutamate--tRNA ligase type 1 subfamily. Monomer.

Its subcellular location is the cytoplasm. The catalysed reaction is tRNA(Glu) + L-glutamate + ATP = L-glutamyl-tRNA(Glu) + AMP + diphosphate. Catalyzes the attachment of glutamate to tRNA(Glu) in a two-step reaction: glutamate is first activated by ATP to form Glu-AMP and then transferred to the acceptor end of tRNA(Glu). The protein is Glutamate--tRNA ligase of Synechococcus sp. (strain CC9605).